A 185-amino-acid polypeptide reads, in one-letter code: Ribosome-recycling factor (185 aa).

Residues 135–159 (ANDEVKKLEKDKAITEDESKKGQDE) are disordered.

The protein belongs to the RRF family.

It localises to the cytoplasm. In terms of biological role, responsible for the release of ribosomes from messenger RNA at the termination of protein biosynthesis. May increase the efficiency of translation by recycling ribosomes from one round of translation to another. This Campylobacter curvus (strain 525.92) protein is Ribosome-recycling factor.